The primary structure comprises 197 residues: Mediator of RNA polymerase II transcription subunit 21 (197 aa).

The segment at 37 to 112 (PPPSVPSAVP…APPRPDSPNT (76 aa)) is disordered. 2 stretches are compositionally biased toward low complexity: residues 60–70 (PTSGTATNTPG) and 90–100 (PQMQQQHQEQP). The stretch at 140-183 (GIKSSEAEQQERIKQLAEELRVVEEERSARRRELRRLGEKVDGL) forms a coiled coil.

This sequence belongs to the Mediator complex subunit 21 family. In terms of assembly, component of the Mediator complex.

It is found in the nucleus. In terms of biological role, component of the Mediator complex, a coactivator involved in the regulated transcription of nearly all RNA polymerase II-dependent genes. Mediator functions as a bridge to convey information from gene-specific regulatory proteins to the basal RNA polymerase II transcription machinery. Mediator is recruited to promoters by direct interactions with regulatory proteins and serves as a scaffold for the assembly of a functional preinitiation complex with RNA polymerase II and the general transcription factors. In Coccidioides immitis (strain RS) (Valley fever fungus), this protein is Mediator of RNA polymerase II transcription subunit 21 (SRB7).